The chain runs to 371 residues: N-acetyldiaminopimelate deacetylase (371 aa).

Asp68 is an active-site residue. Residue Glu127 is the Proton acceptor of the active site.

This sequence belongs to the peptidase M20A family. N-acetyldiaminopimelate deacetylase subfamily.

It catalyses the reaction N-acetyl-(2S,6S)-2,6-diaminopimelate + H2O = (2S,6S)-2,6-diaminopimelate + acetate. It functions in the pathway amino-acid biosynthesis; L-lysine biosynthesis via DAP pathway; LL-2,6-diaminopimelate from (S)-tetrahydrodipicolinate (acetylase route): step 3/3. Catalyzes the conversion of N-acetyl-diaminopimelate to diaminopimelate and acetate. The protein is N-acetyldiaminopimelate deacetylase of Listeria innocua serovar 6a (strain ATCC BAA-680 / CLIP 11262).